The chain runs to 285 residues: Probable endonuclease 4 (285 aa).

Zn(2+) contacts are provided by histidine 69, histidine 109, glutamate 145, aspartate 179, histidine 182, histidine 216, aspartate 229, histidine 231, and glutamate 261.

Belongs to the AP endonuclease 2 family. Zn(2+) is required as a cofactor.

The catalysed reaction is Endonucleolytic cleavage to 5'-phosphooligonucleotide end-products.. Endonuclease IV plays a role in DNA repair. It cleaves phosphodiester bonds at apurinic or apyrimidinic (AP) sites, generating a 3'-hydroxyl group and a 5'-terminal sugar phosphate. The protein is Probable endonuclease 4 of Salmonella agona (strain SL483).